The chain runs to 429 residues: Probable M18 family aminopeptidase 2 (429 aa).

Zn(2+)-binding residues include His82, His156, and His401.

The protein belongs to the peptidase M18 family. The cofactor is Zn(2+).

The polypeptide is Probable M18 family aminopeptidase 2 (Pseudomonas aeruginosa (strain LESB58)).